A 280-amino-acid chain; its full sequence is 3-hydroxyanthranilate 3,4-dioxygenase (280 aa).

Residues 1-160 (MAIPVNVKKW…SEQYKSGKPD (160 aa)) form a domain A (catalytic) region. Residue Arg43 coordinates O2. Residues His47, Glu53, and His91 each coordinate Fe cation. Position 53 (Glu53) interacts with substrate. Substrate-binding residues include Arg95 and Glu105. A linker region spans residues 161–177 (PAQPIGKMPFFLNTEQV). The tract at residues 178–280 (MEPFSFQNWL…IALSTSQVPA (103 aa)) is domain B.

Belongs to the 3-HAO family. Monomer. Fe(2+) is required as a cofactor.

It is found in the cytoplasm. The protein localises to the cytosol. It catalyses the reaction 3-hydroxyanthranilate + O2 = (2Z,4Z)-2-amino-3-carboxymuconate 6-semialdehyde. The protein operates within cofactor biosynthesis; NAD(+) biosynthesis; quinolinate from L-kynurenine: step 3/3. Its function is as follows. Catalyzes the oxidative ring opening of 3-hydroxyanthranilate to 2-amino-3-carboxymuconate semialdehyde, which spontaneously cyclizes to quinolinate. This Xenopus tropicalis (Western clawed frog) protein is 3-hydroxyanthranilate 3,4-dioxygenase (haao).